The sequence spans 87 residues: Apolipoprotein C-I (87 aa).

An N-terminal signal peptide occupies residues 1–26; it reads MRFILSLPVLAVVLAMVLEGPAPAQA.

It belongs to the apolipoprotein C1 family.

It is found in the secreted. Inhibitor of lipoprotein binding to the low density lipoprotein (LDL) receptor, LDL receptor-related protein, and very low density lipoprotein (VLDL) receptor. Associates with high density lipoproteins (HDL) and the triacylglycerol-rich lipoproteins in the plasma and makes up about 10% of the protein of the VLDL and 2% of that of HDL. Appears to interfere directly with fatty acid uptake and is also the major plasma inhibitor of cholesteryl ester transfer protein (CETP). Binds free fatty acids and reduces their intracellular esterification. Modulates the interaction of APOE with beta-migrating VLDL and inhibits binding of beta-VLDL to the LDL receptor-related protein. The protein is Apolipoprotein C-I (APOC1) of Pteropus alecto (Black flying fox).